A 179-amino-acid polypeptide reads, in one-letter code: UPF0302 protein YpiB (179 aa).

Belongs to the UPF0302 family.

In Bacillus subtilis (strain 168), this protein is UPF0302 protein YpiB (ypiB).